Consider the following 312-residue polypeptide: Coiled-coil domain-containing protein 160 homolog (312 aa).

Residues 126 to 281 (SEGAKFKNQL…EERKREKTHS (156 aa)) adopt a coiled-coil conformation.

It belongs to the CCDC160 family.

This chain is Coiled-coil domain-containing protein 160 homolog, found in Xenopus tropicalis (Western clawed frog).